A 147-amino-acid chain; its full sequence is Large ribosomal subunit protein uL15 (147 aa).

The interval 1-55 (MKLHEIAPQPGSTKRRRRVGRGVSAGQGASCGLGMRGQKSRSGTGTRPGFEGGQM) is disordered. Over residues 23–35 (VSAGQGASCGLGM) the composition is skewed to gly residues.

It belongs to the universal ribosomal protein uL15 family. In terms of assembly, part of the 50S ribosomal subunit.

Binds to the 23S rRNA. This Microcystis aeruginosa (strain NIES-843 / IAM M-2473) protein is Large ribosomal subunit protein uL15.